We begin with the raw amino-acid sequence, 787 residues long: Probable basic-leucine zipper transcription factor J (787 aa).

Low complexity predominate over residues 18 to 90 (NSNIHNNTHN…NNTQNTNNGT (73 aa)). Disordered regions lie at residues 18–95 (NSNI…LTPL), 153–173 (LNLS…NNNP), 186–306 (LQSQ…NNNT), 343–372 (DSLL…IQTS), 401–441 (LSSA…NNSN), and 473–507 (ASSE…DEDQ). Low complexity-rich tracts occupy residues 186–223 (LQSQ…SSPI), 235–258 (SSPI…STSP), 273–305 (NNNN…LNNN), and 351–366 (NNNN…NNNN). Positions 473-483 (ASSESAQSESS) are enriched in low complexity. In terms of domain architecture, bZIP spans 549 to 612 (ELKKQRRLVK…KALKKQLYSL (64 aa)). Residues 551-603 (KKQRRLVKNREYASQSRSRRKIYVENIETKLQKTNQDCASIKSQLNSVKEENK) are basic motif. The tract at residues 605 to 612 (LKKQLYSL) is leucine-zipper. 2 disordered regions span residues 723–747 (SNYI…VVST) and 763–787 (DKEV…SPLN). The segment covering 763-778 (DKEVPQKCKDSSDLKC) has biased composition (basic and acidic residues).

Belongs to the bZIP family.

It is found in the nucleus. In terms of biological role, probable transcriptional regulator. The polypeptide is Probable basic-leucine zipper transcription factor J (bzpJ) (Dictyostelium discoideum (Social amoeba)).